A 513-amino-acid chain; its full sequence is ATP synthase subunit alpha (513 aa).

169–176 (GDRQIGKT) is a binding site for ATP.

It belongs to the ATPase alpha/beta chains family. F-type ATPases have 2 components, CF(1) - the catalytic core - and CF(0) - the membrane proton channel. CF(1) has five subunits: alpha(3), beta(3), gamma(1), delta(1), epsilon(1). CF(0) has three main subunits: a(1), b(2) and c(9-12). The alpha and beta chains form an alternating ring which encloses part of the gamma chain. CF(1) is attached to CF(0) by a central stalk formed by the gamma and epsilon chains, while a peripheral stalk is formed by the delta and b chains.

The protein localises to the cell inner membrane. It carries out the reaction ATP + H2O + 4 H(+)(in) = ADP + phosphate + 5 H(+)(out). Functionally, produces ATP from ADP in the presence of a proton gradient across the membrane. The alpha chain is a regulatory subunit. In Francisella tularensis subsp. tularensis (strain SCHU S4 / Schu 4), this protein is ATP synthase subunit alpha.